The chain runs to 1097 residues: Transmembrane protein 132D (1097 aa).

The first 30 residues, 1 to 30, serve as a signal peptide directing secretion; sequence MCPSEMGTLWYLWSPVLISLAALFSKVTEG. Residues 31–913 are Extracellular-facing; the sequence is RGILESIQRF…PDQAAKGLSD (883 aa). The segment covering 233–245 has biased composition (basic and acidic residues); that stretch reads DERGDCAKEDSRK. Disordered stretches follow at residues 233-263 and 885-906; these read DERGDCAKEDSRKSGGAPAGHNDVDESSPPL and SFPDQVDLPGSNVGTEEHDPDQ. The chain crosses the membrane as a helical span at residues 914-934; that stretch reads LEIGMYALLGVFCLAILVFLI. At 935 to 1097 the chain is on the cytoplasmic side; it reads NCVTFALKYR…SCMERLHEHV (163 aa). Residues 1021–1042 are disordered; that stretch reads MLTDDKEQKSEPPTSPTSKRKR.

This sequence belongs to the TMEM132 family. Expressed in mature oligodendrocytes in the brain.

It localises to the membrane. In terms of biological role, regulates neuronal morphology via inhibition of the WAVE regulatory complex (WCR), a complex that controls F-actin cytoskeletal dynamics. This chain is Transmembrane protein 132D (Tmem132d), found in Rattus norvegicus (Rat).